The following is a 373-amino-acid chain: Thyroid hormone receptor beta (373 aa).

The modulating stretch occupies residues 1–18 (MPSSMSGYIPSYLDKDEL). Zn(2+) is bound by residues C19, C22, C36, C39, C57, C63, C73, and C76. NR C4-type zinc fingers lie at residues 19 to 39 (CVVC…CEGC) and 57 to 81 (CKYE…FKKC). Residues 19–93 (CVVCGDKATG…VGMATDLVLD (75 aa)) constitute a DNA-binding region (nuclear receptor). Residues 129 to 373 (EEWELIQVVT…PPLFLEVFED (245 aa)) form the NR LBD domain. 3 residues coordinate 3,3',5-triiodo-L-thyronine: R194, N243, and H347. Positions 194, 243, and 347 each coordinate L-thyroxine.

The protein belongs to the nuclear hormone receptor family. NR1 subfamily.

The protein localises to the nucleus. Its function is as follows. Nuclear hormone receptor that can act as a repressor or activator of transcription. High affinity receptor for thyroid hormones, including triiodothyronine and thyroxine. This Aquarana catesbeiana (American bullfrog) protein is Thyroid hormone receptor beta (thrb).